We begin with the raw amino-acid sequence, 334 residues long: MDERLVSTEADNHESAIEQSLRPQTLSQYIGQQKVKDNLSVFIEAARMRQETLDHVLLYGPPGLGKTTLASIIANEMNVQLRTTSGPAIERPGDLAAILTSLEPGDVLFIDEIHRLQRSIEEVLYPAMEDFCLDIVIGKGDTARSVRLDLPPFTLVGATTRVGLLTAPLRDRFGVHARLEYYEQRDLAHIVSRTAELFEIGIDLRSAEEIARRSRGTPRVANRLLRRVRDFAQVLGNHSITEDIAEDALERLQVDKLGLDHIDHKLLLSMIEKFRGGPVGLDTISATIGEESHTIEDVYEPYLLQIGFLQRTPRGRVVTREAYEHFQMEVPIRD.

The large ATPase domain (RuvB-L) stretch occupies residues Met-1–Tyr-182. ATP-binding positions include Leu-21, Arg-22, Gly-63, Lys-66, Thr-67, Thr-68, Glu-129–Phe-131, Arg-172, Tyr-182, and Arg-219. Residue Thr-67 coordinates Mg(2+). Positions Glu-183 to Gln-253 are small ATPAse domain (RuvB-S). Positions Lys-256 to Asp-334 are head domain (RuvB-H). DNA-binding residues include Arg-311 and Arg-316.

This sequence belongs to the RuvB family. Homohexamer. Forms an RuvA(8)-RuvB(12)-Holliday junction (HJ) complex. HJ DNA is sandwiched between 2 RuvA tetramers; dsDNA enters through RuvA and exits via RuvB. An RuvB hexamer assembles on each DNA strand where it exits the tetramer. Each RuvB hexamer is contacted by two RuvA subunits (via domain III) on 2 adjacent RuvB subunits; this complex drives branch migration. In the full resolvosome a probable DNA-RuvA(4)-RuvB(12)-RuvC(2) complex forms which resolves the HJ.

The protein resides in the cytoplasm. The enzyme catalyses ATP + H2O = ADP + phosphate + H(+). Its function is as follows. The RuvA-RuvB-RuvC complex processes Holliday junction (HJ) DNA during genetic recombination and DNA repair, while the RuvA-RuvB complex plays an important role in the rescue of blocked DNA replication forks via replication fork reversal (RFR). RuvA specifically binds to HJ cruciform DNA, conferring on it an open structure. The RuvB hexamer acts as an ATP-dependent pump, pulling dsDNA into and through the RuvAB complex. RuvB forms 2 homohexamers on either side of HJ DNA bound by 1 or 2 RuvA tetramers; 4 subunits per hexamer contact DNA at a time. Coordinated motions by a converter formed by DNA-disengaged RuvB subunits stimulates ATP hydrolysis and nucleotide exchange. Immobilization of the converter enables RuvB to convert the ATP-contained energy into a lever motion, pulling 2 nucleotides of DNA out of the RuvA tetramer per ATP hydrolyzed, thus driving DNA branch migration. The RuvB motors rotate together with the DNA substrate, which together with the progressing nucleotide cycle form the mechanistic basis for DNA recombination by continuous HJ branch migration. Branch migration allows RuvC to scan DNA until it finds its consensus sequence, where it cleaves and resolves cruciform DNA. The sequence is that of Holliday junction branch migration complex subunit RuvB from Bacillus pumilus (strain SAFR-032).